We begin with the raw amino-acid sequence, 658 residues long: Probable Xaa-Pro aminopeptidase P (658 aa).

The Mn(2+) site is built by D449, D460, E558, and E572.

It belongs to the peptidase M24B family. Mn(2+) is required as a cofactor.

It catalyses the reaction Release of any N-terminal amino acid, including proline, that is linked to proline, even from a dipeptide or tripeptide.. In terms of biological role, catalyzes the removal of a penultimate prolyl residue from the N-termini of peptides. In Aspergillus clavatus (strain ATCC 1007 / CBS 513.65 / DSM 816 / NCTC 3887 / NRRL 1 / QM 1276 / 107), this protein is Probable Xaa-Pro aminopeptidase P (ampp).